A 546-amino-acid polypeptide reads, in one-letter code: ATP synthase F(1) complex catalytic subunit beta, mitochondrial (546 aa).

The transit peptide at 1-45 (MLGFVGRVAATSASGALRGLGPSPLPQVKVLLRASPAALQSARDY) directs the protein to the mitochondrion. N6-acetyllysine; alternate is present on residues Lys123, Lys132, and Lys160. An N6-succinyllysine; alternate mark is found at Lys123, Lys132, and Lys160. Lys197 carries the post-translational modification N6-acetyllysine. Positions 208, 209, 210, 211, 212, and 213 each coordinate ADP. Gly208 contacts ATP. Phosphate contacts are provided by Gly208, Val209, Gly210, Lys211, and Thr212. ATP contacts are provided by Gly210, Lys211, Thr212, and Val213. Position 212 (Thr212) interacts with Mg(2+). Residue Glu237 coordinates Mg(2+). Residue Arg238 participates in ATP binding. An N6-acetyllysine; alternate mark is found at Lys258 and Lys263. N6-succinyllysine; alternate occurs at positions 258 and 263. Position 311 is a phosphothreonine (Thr311). Lys425 carries the post-translational modification N6-acetyllysine. Position 432 is a phosphoserine (Ser432). N6-acetyllysine is present on residues Lys479 and Lys484. Lys521 is modified (N6-acetyllysine; alternate). Position 521 is an N6-succinyllysine; alternate (Lys521). The interval 521 to 546 (KLAEEHSATQTSPSPKGAAAXXXRVV) is disordered.

Belongs to the ATPase alpha/beta chains family. In terms of assembly, homotrimer. Component of the ATP synthase complex composed at least of ATP5F1A/subunit alpha, ATP5F1B/subunit beta, ATP5MC1/subunit c (homooctomer), MT-ATP6/subunit a, MT-ATP8/subunit 8, ATP5ME/subunit e, ATP5MF/subunit f, ATP5MG/subunit g, ATP5MK/subunit k, ATP5MJ/subunit j, ATP5F1C/subunit gamma, ATP5F1D/subunit delta, ATP5F1E/subunit epsilon, ATP5PF/subunit F6, ATP5PB/subunit b, ATP5PD/subunit d, ATP5PO/subunit OSCP. ATP synthase complex consists of a soluble F(1) head domain (subunits alpha(3) and beta(3)) - the catalytic core - and a membrane F(0) domain - the membrane proton channel (subunits c, a, 8, e, f, g, k and j). These two domains are linked by a central stalk (subunits gamma, delta, and epsilon) rotating inside the F1 region and a stationary peripheral stalk (subunits F6, b, d, and OSCP). Interacts with PPIF. Interacts with BCL2L1 isoform BCL-X(L); the interaction mediates the association of BCL2L1 isoform BCL-X(L) with the mitochondrial membrane F(1)F(0) ATP synthase and enhances neurons metabolic efficiency. Interacts with CLN5 and PPT1. Interacts with S100A1; this interaction increases F1-ATPase activity. Interacts with MTLN. Interacts with TTC5/STRAP; the interaction results in decreased mitochondrial ATP production.

The protein localises to the mitochondrion inner membrane. The catalysed reaction is ATP + H2O + 4 H(+)(in) = ADP + phosphate + 5 H(+)(out). Its function is as follows. Catalytic subunit beta, of the mitochondrial membrane ATP synthase complex (F(1)F(0) ATP synthase or Complex V) that produces ATP from ADP in the presence of a proton gradient across the membrane which is generated by electron transport complexes of the respiratory chain. ATP synthase complex consist of a soluble F(1) head domain - the catalytic core - and a membrane F(1) domain - the membrane proton channel. These two domains are linked by a central stalk rotating inside the F(1) region and a stationary peripheral stalk. During catalysis, ATP synthesis in the catalytic domain of F(1) is coupled via a rotary mechanism of the central stalk subunits to proton translocation. In vivo, can only synthesize ATP although its ATP hydrolase activity can be activated artificially in vitro. With the subunit alpha (ATP5F1A), forms the catalytic core in the F(1) domain. The chain is ATP synthase F(1) complex catalytic subunit beta, mitochondrial from Canis lupus familiaris (Dog).